A 243-amino-acid chain; its full sequence is MNVFKRCSGYIRLSNETRARFPFAAMSYVNVTLCAFGAVVAGYLSAANTFVELQFLQYWLMLSLFVTGLINATLFLRQGKTEAHEIVYELKMLHAMYFANALVNHGLLATERSAVSAVLVANLVHCCALVLLFVELTVLLGHALGTYSDYRYAKACYMLALFVSAAVAVITVGASGMKSAPLCDNLLVAVVLSIAYLLVAIVWAARKEAAGPNLQRVQVVPFNDPPPSFASVEMDLLNAKILK.

This is an uncharacterized protein from Orgyia pseudotsugata multicapsid polyhedrosis virus (OpMNPV).